We begin with the raw amino-acid sequence, 518 residues long: Protein PAC2 (518 aa).

A CAP-Gly domain is found at 23–67 (VIKPWPSVKAYGVEWDDHSRGKHSGTIDDIHYFDVQIPNSGSFLK). 8 LRR repeats span residues 153 to 174 (NVKD…CEFI), 179 to 201 (NLES…KEYD), 204 to 227 (HIKT…LKSF), 229 to 252 (TLKM…ENEI), 255 to 276 (TLEE…PKNL), 277 to 298 (TLKG…AIYS), 299 to 319 (VESL…DDLN), and 324 to 345 (SLKN…INVE).

The protein localises to the cytoplasm. The protein resides in the cytoskeleton. Functionally, required for viability in the absence of the kinesin-related CIN8 mitotic motor. Seems to be involved in the assembly of alpha-tubulin. The polypeptide is Protein PAC2 (PAC2) (Saccharomyces cerevisiae (strain ATCC 204508 / S288c) (Baker's yeast)).